A 2327-amino-acid chain; its full sequence is Voltage-dependent N-type calcium channel subunit alpha-1B (2327 aa).

The disordered stretch occupies residues Met1–Leu37. Topologically, residues Met1–Arg90 are cytoplasmic. A compositionally biased stretch (gly residues) spans Gly10 to Leu37. Arg22 is subject to Omega-N-methylarginine. The I repeat unit spans residues Asn82–Phe359. The helical transmembrane segment at Ile91–Leu114 threads the bilayer. The Extracellular segment spans residues Glu115 to Asp131. The chain crosses the membrane as a helical span at residues Asp132 to Leu152. Residues Gly153 to Arg163 are Cytoplasmic-facing. The chain crosses the membrane as a helical span at residues Asn164 to Ala182. Residues Gly183 to Asp187 lie on the Extracellular side of the membrane. The chain crosses the membrane as a helical span at residues Leu188–Val211. The Cytoplasmic segment spans residues Val212–Val221. Residues Pro222–Phe244 form a helical membrane-spanning segment. Residues Tyr245–Trp331 lie on the Extracellular side of the membrane. The N-linked (GlcNAc...) asparagine glycan is linked to Asn256. A helical transmembrane segment spans residues Asn332–Ser356. Residues Gly357–Gln482 lie on the Cytoplasmic side of the membrane. A binding to the beta subunit region spans residues Gln379–Glu396. A Phosphoserine modification is found at Ser411. Residue Ala451–Thr458 participates in ATP binding. One copy of the II repeat lies at Glu468–Leu712. A helical transmembrane segment spans residues Ser483–Met501. Topologically, residues Val502–Thr511 are extracellular. A helical transmembrane segment spans residues Thr512–Tyr534. The Cytoplasmic portion of the chain corresponds to Gly535–Ser544. Residue Ser544 participates in a 1,2-diacyl-sn-glycero-3-phospho-(1D-myo-inositol-4,5-bisphosphate) binding. The helical transmembrane segment at Ser545–Ile566 threads the bilayer. The Extracellular portion of the chain corresponds to Lys567–Gly573. The helical transmembrane segment at Ile574–Phe586 threads the bilayer. A 1,2-diacyl-sn-glycero-3-phospho-(1D-myo-inositol-4,5-bisphosphate)-binding residues include Arg584 and Lys587. The Cytoplasmic segment spans residues Lys587–Asn604. The chain crosses the membrane as a helical span at residues Ser605 to Leu630. The Extracellular segment spans residues Phe631–Gly682. A helical transmembrane segment spans residues Met683–Val709. Residues Asp710–Tyr1140 lie on the Cytoplasmic side of the membrane. A phosphoserine mark is found at Ser745, Ser748, and Ser783. Disordered regions lie at residues Thr802–His1015 and Glu1042–Thr1066. Basic and acidic residues-rich tracts occupy residues Val805–Leu826, Glu869–Ala885, Gly914–Pro924, Gly961–Thr972, and Pro988–His1015. Positions Gln1050 to Thr1066 are enriched in polar residues. Residue Ser1058 is modified to Phosphoserine. One copy of the III repeat lies at Asn1126–Phe1412. The helical transmembrane segment at Phe1141–Glu1159 threads the bilayer. At Asp1160–Phe1167 the chain is on the extracellular side. Residues Arg1168 to Ile1192 form a helical membrane-spanning segment. At Asp1193–Asp1206 the chain is on the cytoplasmic side. A helical transmembrane segment spans residues Leu1207 to Gly1231. At Ser1232–Ile1237 the chain is on the extracellular side. The helical transmembrane segment at Asn1238 to Leu1258 threads the bilayer. Topologically, residues Pro1259 to Leu1276 are cytoplasmic. A helical transmembrane segment spans residues Asn1277–Leu1296. The Extracellular segment spans residues Phe1297–Met1383. The helical transmembrane segment at Glu1384–Ile1409 threads the bilayer. The Cytoplasmic portion of the chain corresponds to Ile1410–Pro1464. The stretch at Asn1449–Phe1702 is one IV repeat. The helical transmembrane segment at Pro1465 to Met1483 threads the bilayer. Over Lys1484 to Glu1491 the chain is Extracellular. Residues Tyr1492–Ile1516 form a helical membrane-spanning segment. Residues Ala1517–Asp1526 are Cytoplasmic-facing. The chain crosses the membrane as a helical span at residues Ala1527 to Ile1548. Residues Ala1549 to Asn1554 are Extracellular-facing. Residue Asn1554 is glycosylated (N-linked (GlcNAc...) asparagine). Residues Leu1555 to Gly1573 form a helical membrane-spanning segment. The Cytoplasmic segment spans residues Tyr1574–Tyr1592. Residues Val1593–Phe1612 form a helical membrane-spanning segment. At Gly1613–Phe1674 the chain is on the extracellular side. The N-linked (GlcNAc...) asparagine glycan is linked to Asn1666. Residues Ala1675–Ile1698 form a helical membrane-spanning segment. At Met1699 to Cys2327 the chain is on the cytoplasmic side. Positions His1715–Pro1750 constitute an EF-hand domain. The Ca(2+) site is built by Asp1728, Arg1734, and Asp1739. The tract at residues Thr1972–Thr2193 is disordered. Basic residues predominate over residues Ser2039 to Lys2053. Position 2056 is a phosphoserine (Ser2056). A compositionally biased stretch (basic and acidic residues) spans Cys2088–Gln2104. Polar residues-rich tracts occupy residues Pro2131–Thr2141 and Gly2152–Ser2168. A phosphoserine mark is found at Ser2212, Ser2221, and Ser2244. 2 disordered regions span residues Glu2230–Gly2249 and Ala2273–Ser2292. Positions Ser2276–Ser2292 are enriched in low complexity.

The protein belongs to the calcium channel alpha-1 subunit (TC 1.A.1.11) family. CACNA1B subfamily. Multisubunit complex consisting of alpha-1, alpha-2, beta and delta subunits in a 1:1:1:1 ratio. The channel activity is directed by the pore-forming and voltage-sensitive alpha-1 subunit. In many cases, this subunit is sufficient to generate voltage-sensitive calcium channel activity. The auxiliary subunits beta and alpha-2/delta linked by a disulfide bridge regulate the channel activity. Interacts with RIMS1. Interacts with FMR1 (via C-terminus); this interaction induces a decrease in the number of presynaptic functional CACNA1B channels at the cell surface. In terms of processing, phosphorylated in vitro by CaM-kinase II, PKA, PKC and CGPK. In terms of tissue distribution, widespread expression throughout the brain. Highest levels in pyramidal cell layers C1, C2 and C3 of the hippocampus, in the dentate gyrus, in the cortex layers 2 et 4, in the subiculum and the habenula.

It localises to the membrane. The catalysed reaction is Ca(2+)(in) = Ca(2+)(out). With respect to regulation, is specifically blocked by omega-conotoxin GVIA. Is specifically blocked by omega-conotoxin MVIIA (ziconotide). Is insensitive to dihydropyridines (DHP). Its function is as follows. Voltage-sensitive calcium channels (VSCC) mediate the entry of calcium ions into excitable cells and are also involved in a variety of calcium-dependent processes, including muscle contraction, hormone or neurotransmitter release, gene expression, cell motility, cell division and cell death. This alpha-1B subunit gives rise to N-type calcium currents. N-type calcium channels belong to the 'high-voltage activated' (HVA) group. They are involved in pain signaling. Calcium channels containing alpha-1B subunit may play a role in directed migration of immature neurons. Mediates Ca(2+) release probability at hippocampal neuronal soma and synaptic terminals. The polypeptide is Voltage-dependent N-type calcium channel subunit alpha-1B (Cacna1b) (Mus musculus (Mouse)).